Here is a 142-residue protein sequence, read N- to C-terminus: Large ribosomal subunit protein uL13 (142 aa).

Belongs to the universal ribosomal protein uL13 family. Part of the 50S ribosomal subunit.

Functionally, this protein is one of the early assembly proteins of the 50S ribosomal subunit, although it is not seen to bind rRNA by itself. It is important during the early stages of 50S assembly. The protein is Large ribosomal subunit protein uL13 of Polaromonas sp. (strain JS666 / ATCC BAA-500).